The primary structure comprises 127 residues: Translation initiation factor 5A (127 aa).

K35 bears the Hypusine mark.

This sequence belongs to the eIF-5A family.

It localises to the cytoplasm. In terms of biological role, functions by promoting the formation of the first peptide bond. The sequence is that of Translation initiation factor 5A (eIF5A) from Methanothrix thermoacetophila (strain DSM 6194 / JCM 14653 / NBRC 101360 / PT) (Methanosaeta thermophila).